We begin with the raw amino-acid sequence, 368 residues long: MISNINLEDKFFSFFFTLGFSKEFFNFLWIIFSILILMLGVTIGVLVLVWLERKISAAIQQRIGPEYAGPLGIIQALADGIKLFLKEDIVPAQGDVWLFNIGPILVLIPVFLSYLVIPFEYNVILANFSIGVFFWIAVSSVVPLGLLMAGYGSNNKYSFLGGLRAAAQSISYEIPLALSVLSIALLSNSLSTVDIVEAQSKYGFLSWNLWRQPIGFIVFFIASLAECERLPFDLPEAEEELVAGYQTEYSGMKFAFFYLASYLNLLVSSLFVTILYLGGWHFSIPFFSLFKNFEWNLMSNGISEVISIIIGIVITLVKSYLFLFISIMTRWTLPRIRIDQLLNLGWKFLLPIALGNLLLTTSFQLFLL.

Transmembrane regions (helical) follow at residues 27-47 (FLWIIFSILILMLGVTIGVLV), 97-117 (WLFNIGPILVLIPVFLSYLVI), 130-150 (IGVFFWIAVSSVVPLGLLMAG), 166-186 (AAQSISYEIPLALSVLSIALL), 204-224 (FLSWNLWRQPIGFIVFFIASL), 249-269 (YSGMKFAFFYLASYLNLLVSS), 270-290 (LFVTILYLGGWHFSIPFFSLF), 305-325 (VISIIIGIVITLVKSYLFLFI), and 348-368 (FLLPIALGNLLLTTSFQLFLL).

Belongs to the complex I subunit 1 family. As to quaternary structure, NDH is composed of at least 16 different subunits, 5 of which are encoded in the nucleus.

It is found in the plastid. It localises to the chloroplast thylakoid membrane. It carries out the reaction a plastoquinone + NADH + (n+1) H(+)(in) = a plastoquinol + NAD(+) + n H(+)(out). The catalysed reaction is a plastoquinone + NADPH + (n+1) H(+)(in) = a plastoquinol + NADP(+) + n H(+)(out). Functionally, NDH shuttles electrons from NAD(P)H:plastoquinone, via FMN and iron-sulfur (Fe-S) centers, to quinones in the photosynthetic chain and possibly in a chloroplast respiratory chain. The immediate electron acceptor for the enzyme in this species is believed to be plastoquinone. Couples the redox reaction to proton translocation, and thus conserves the redox energy in a proton gradient. This is NAD(P)H-quinone oxidoreductase subunit 1, chloroplastic from Marchantia polymorpha (Common liverwort).